Reading from the N-terminus, the 2207-residue chain is DNA polymerase epsilon catalytic subunit A (2207 aa).

Disordered regions lie at residues 1–20 (MPSR…AASF), 1201–1233 (SMEK…PFAS), and 1934–1961 (RPES…ENEE). The Zn(2+) site is built by C2075, C2078, C2113, and C2116. Residues 2075–2116 (CSACCLIRDLDLCRDEDVLPERGSGSGPDSATSSRPWCCPFC) form a CysA-type zinc finger. [4Fe-4S] cluster is bound by residues C2147, C2150, C2162, and C2164. The CysB motif motif lies at 2147–2164 (CSKCGTLKISEFMEHCSC).

This sequence belongs to the DNA polymerase type-B family. As to quaternary structure, heterotetramer. Consists of 4 subunits: pol2, dpb2, dpb3 and dpb4. The cofactor is [4Fe-4S] cluster.

It is found in the nucleus. The enzyme catalyses DNA(n) + a 2'-deoxyribonucleoside 5'-triphosphate = DNA(n+1) + diphosphate. Its function is as follows. DNA polymerase II participates in chromosomal DNA replication. The sequence is that of DNA polymerase epsilon catalytic subunit A (pol2) from Emericella nidulans (strain FGSC A4 / ATCC 38163 / CBS 112.46 / NRRL 194 / M139) (Aspergillus nidulans).